The following is a 61-amino-acid chain: Sperm protamine P1 (61 aa).

Residues 1 to 61 form a disordered region; it reads MARYRHSRSR…RYSRRRRRRY (61 aa).

This sequence belongs to the protamine P1 family. In terms of tissue distribution, testis.

It localises to the nucleus. Its subcellular location is the chromosome. In terms of biological role, protamines substitute for histones in the chromatin of sperm during the haploid phase of spermatogenesis. They compact sperm DNA into a highly condensed, stable and inactive complex. The polypeptide is Sperm protamine P1 (PRM1) (Setonix brachyurus (Quokka)).